A 320-amino-acid chain; its full sequence is NAD kinase (320 aa).

Asp96 (proton acceptor) is an active-site residue. NAD(+) contacts are provided by residues 96–97 (DG), Arg101, 170–171 (NE), Asp200, and 211–216 (TAYAFS).

It belongs to the NAD kinase family. The cofactor is a divalent metal cation.

It localises to the cytoplasm. The enzyme catalyses NAD(+) + ATP = ADP + NADP(+) + H(+). In terms of biological role, involved in the regulation of the intracellular balance of NAD and NADP, and is a key enzyme in the biosynthesis of NADP. Catalyzes specifically the phosphorylation on 2'-hydroxyl of the adenosine moiety of NAD to yield NADP. In Rhodococcus opacus (strain B4), this protein is NAD kinase.